Here is a 366-residue protein sequence, read N- to C-terminus: S-adenosylmethionine:tRNA ribosyltransferase-isomerase (366 aa).

It belongs to the QueA family. As to quaternary structure, monomer.

The protein resides in the cytoplasm. It catalyses the reaction 7-aminomethyl-7-carbaguanosine(34) in tRNA + S-adenosyl-L-methionine = epoxyqueuosine(34) in tRNA + adenine + L-methionine + 2 H(+). Its pathway is tRNA modification; tRNA-queuosine biosynthesis. In terms of biological role, transfers and isomerizes the ribose moiety from AdoMet to the 7-aminomethyl group of 7-deazaguanine (preQ1-tRNA) to give epoxyqueuosine (oQ-tRNA). In Bradyrhizobium diazoefficiens (strain JCM 10833 / BCRC 13528 / IAM 13628 / NBRC 14792 / USDA 110), this protein is S-adenosylmethionine:tRNA ribosyltransferase-isomerase.